The following is an 873-amino-acid chain: Leucine--tRNA ligase (873 aa).

A 'HIGH' region motif is present at residues Pro41 to His51. The 'KMSKS' region signature appears at Lys645–Ser649. Lys648 contacts ATP.

This sequence belongs to the class-I aminoacyl-tRNA synthetase family.

The protein resides in the cytoplasm. The catalysed reaction is tRNA(Leu) + L-leucine + ATP = L-leucyl-tRNA(Leu) + AMP + diphosphate. The chain is Leucine--tRNA ligase from Cereibacter sphaeroides (strain ATCC 17025 / ATH 2.4.3) (Rhodobacter sphaeroides).